The primary structure comprises 434 residues: Trigger factor (434 aa).

The region spanning 161–246 is the PPIase FKBP-type domain; that stretch reads GKRVSIDFVG…VNKVEARELP (86 aa).

This sequence belongs to the FKBP-type PPIase family. Tig subfamily.

The protein localises to the cytoplasm. It catalyses the reaction [protein]-peptidylproline (omega=180) = [protein]-peptidylproline (omega=0). Functionally, involved in protein export. Acts as a chaperone by maintaining the newly synthesized protein in an open conformation. Functions as a peptidyl-prolyl cis-trans isomerase. This is Trigger factor from Vibrio parahaemolyticus serotype O3:K6 (strain RIMD 2210633).